The sequence spans 412 residues: Elongation factor 1-gamma 2 (412 aa).

Serine 2 is modified (N-acetylserine). The GST N-terminal domain occupies 2 to 77 (SQGTLYINRS…YLANQVADEK (76 aa)). Positions 86–217 (DVIEKSQILR…AEKALTYTPP (132 aa)) constitute a GST C-terminal domain. The tract at residues 216 to 253 (PPKKQKAEKPKAEKSKAEKKKDEAKPADDAAPAKKPKH) is disordered. Basic and acidic residues predominate over residues 220-247 (QKAEKPKAEKSKAEKKKDEAKPADDAAP). The 162-residue stretch at 251 to 412 (PKHPLEALGK…KEIVDGKVLK (162 aa)) folds into the EF-1-gamma C-terminal domain.

In terms of assembly, the eukaryotic elongation factor 1 complex (eEF1) is probably a heterohexamer. Two trimeric complexes, each composed of eEF1A (TEF1 or TEF2), eEF1Balpha (EFB1) and eEF1Bgamma (CAM1 or TEF4), are probably dimerized via the eF1Bgamma subunits. The eEF1B subcomplex with the GEF activity is formed of eEF1Balpha and eEF1Bgamma. TEF4 interacts with EFB1.

It is found in the cytoplasm. The protein operates within protein biosynthesis; polypeptide chain elongation. Subunit of the eukaryotic elongation factor 1 complex (eEF1). Probably plays a role in anchoring the complex to other cellular components. The sequence is that of Elongation factor 1-gamma 2 (TEF4) from Saccharomyces cerevisiae (strain ATCC 204508 / S288c) (Baker's yeast).